Here is a 249-residue protein sequence, read N- to C-terminus: Hydantoin racemase (249 aa).

Belongs to the HyuE racemase family. Homohexamer.

It carries out the reaction a D-5-monosubstituted hydantoin = a L-5-monosubstituted hydantoin. The catalysed reaction is D-5-[2-(methylsulfanyl)ethyl]hydantoin = L-5-[2-(methysulfanyl)ethyl]hydantoin. It catalyses the reaction D-5-benzylhydantoin = L-5-benzylhydantoin. The enzyme catalyses D-5-isopropylhydantoin = L-5-isopropylhydantoin. It carries out the reaction D-5-isobutylhydantoin = L-5-isobutylhydantoin. Its activity is regulated as follows. Strongly inhibited by Cu(2+) and Zn(2+). Slightly stimulated by the addition of Mn(2+) or Co(2+), but also by metal-chelating agents such as EDTA or EGTA, indicating that the enzyme is not a metalloenzyme. Its function is as follows. Involved in the asymmetric conversion of racemic 5-substituted hydantoins to the corresponding L-amino acids. Catalyzes the racemization via enolization of D- and L-5-monosubstituted hydantoins. Is able to racemize 5-substituted hydantoins having aromatic or aliphatic substituents such as 5-(2-methylthioethyl)hydantoin, 5-isopropylhydantoin, 5-isobutylhydantoin and 5-benzylhydantoin. The chain is Hydantoin racemase from Pseudomonas sp. (strain NS671).